We begin with the raw amino-acid sequence, 154 residues long: Small ribosomal subunit protein bS16 (154 aa).

The tract at residues 82–154 (VQERAARSNP…EAAAEESTEA (73 aa)) is disordered. Residues 92–109 (KKAEPGEKAKERAEERAA) show a composition bias toward basic and acidic residues. Residues 110–129 (KLAAAEEAANAPAEEPAAEP) are compositionally biased toward low complexity. Acidic residues predominate over residues 142 to 154 (PAEEAAAEESTEA).

This sequence belongs to the bacterial ribosomal protein bS16 family.

The protein is Small ribosomal subunit protein bS16 of Rhizorhabdus wittichii (strain DSM 6014 / CCUG 31198 / JCM 15750 / NBRC 105917 / EY 4224 / RW1) (Sphingomonas wittichii).